The primary structure comprises 236 residues: Protein INCA1 (236 aa).

A Phosphoserine modification is found at serine 23. The interval 75–99 (GLYPPEQLPPPEMLWRRKKRRPCLE) is interaction with CCNA1 and CCNA1/CDK2 complex; essential for CDK2 inhibitory activity. The short motif at 90–95 (RRKKRR) is the Nuclear localization signal element. Threonine 182 carries the post-translational modification Phosphothreonine. Residues serine 191 and serine 194 each carry the phosphoserine modification.

This sequence belongs to the INCA family. As to quaternary structure, interacts with CCNA1. Interacts with CCNA2, CCNB1 and CCNE1. Found in a complex with CCNA1 and CDK2. Interacts with ZNF16; the interaction inhibits INCA1 activity and induces the cell cycle process. Interacts with SPACA9. Interacts with the CCNA1/CDK2 complex. Interacts with ING5, DAZAP2, RNF26, USP15, SPOUT1, DPH7, TRIM26 and RAB5C. Post-translationally, phosphorylated when part of a complex with CCNA1 and CDK2. Strongly phosphorylated by CDK2 on its C-terminal region spanning amino acid 149-221. Less intensively phosphorylated by CDK2 on its first 75 amino acid residues. As to expression, detected in testis, and at lower levels in ovary. Detected at very low levels in testis tumors. Down-regulated in bone marrow cells in acute myeloid and lymphoid leukemia patients as compared with normal bone marrow cells.

Its subcellular location is the nucleus. It localises to the cytoplasm. Binds to CDK2-bound cyclins and inhibits the kinase activity of CDK2; binding to cyclins is critical for its function as CDK inhibitor. Inhibits cell growth and cell proliferation and may play a role in cell cycle control. Required for ING5-mediated regulation of S-phase progression, enhancement of Fas-induced apoptosis and inhibition of cell growth. In Homo sapiens (Human), this protein is Protein INCA1 (INCA1).